The chain runs to 214 residues: Nicotinamidase (214 aa).

Aspartate 18 functions as the Proton acceptor in the catalytic mechanism. The a divalent metal cation site is built by aspartate 56, histidine 58, histidine 62, and histidine 91. Lysine 116 is an active-site residue. Cysteine 161 acts as the Nucleophile in catalysis.

Belongs to the isochorismatase family. A divalent metal cation is required as a cofactor.

It catalyses the reaction nicotinamide + H2O = nicotinate + NH4(+). It functions in the pathway cofactor biosynthesis; nicotinate biosynthesis; nicotinate from nicotinamide: step 1/1. In terms of biological role, catalyzes the deamidation of nicotinamide (NAM) into nicotinate (Na). Functions in the deamidating salvage pathway for production of NAD from nicotinamide. This Acinetobacter baylyi (strain ATCC 33305 / BD413 / ADP1) protein is Nicotinamidase.